A 633-amino-acid polypeptide reads, in one-letter code: Membrane protein insertase YidC (633 aa).

A run of 6 helical transmembrane segments spans residues 3–23 (KNTLIGFLLIGVVLFAFSWFN), 377–397 (FIHNYGILILLMTIIVKIILF), 453–473 (LPMLLQMPILIALFMFFPSAI), 499–519 (IPIITPYFGNHISLFCLLMTI), 541–561 (GMKAMMYMMPLMFLVFFNQYA), and 562–582 (SGLTYYYFISTLITIVQTLIF). The tract at residues 612 to 633 (LEEAQRAQQETLRKQQEAKKKR) is disordered.

Belongs to the OXA1/ALB3/YidC family. Type 1 subfamily. Interacts with the Sec translocase complex via SecD. Specifically interacts with transmembrane segments of nascent integral membrane proteins during membrane integration.

The protein resides in the cell inner membrane. Functionally, required for the insertion and/or proper folding and/or complex formation of integral membrane proteins into the membrane. Involved in integration of membrane proteins that insert both dependently and independently of the Sec translocase complex, as well as at least some lipoproteins. Aids folding of multispanning membrane proteins. The sequence is that of Membrane protein insertase YidC from Parabacteroides distasonis (strain ATCC 8503 / DSM 20701 / CIP 104284 / JCM 5825 / NCTC 11152).